The following is a 392-amino-acid chain: Methylthioribose kinase (392 aa).

Residues asparagine 38, lysine 53, and 107 to 109 (EDL) contribute to the ATP site. Aspartate 225 provides a ligand contact to substrate. 242 to 244 (DPE) contributes to the ATP binding site. Arginine 332 serves as a coordination point for substrate.

This sequence belongs to the methylthioribose kinase family. In terms of assembly, homodimer.

It catalyses the reaction 5-(methylsulfanyl)-D-ribose + ATP = 5-(methylsulfanyl)-alpha-D-ribose 1-phosphate + ADP + H(+). Its pathway is amino-acid biosynthesis; L-methionine biosynthesis via salvage pathway; S-methyl-5-thio-alpha-D-ribose 1-phosphate from S-methyl-5'-thioadenosine (hydrolase route): step 2/2. In terms of biological role, catalyzes the phosphorylation of methylthioribose into methylthioribose-1-phosphate. In Bacillus mycoides (strain KBAB4) (Bacillus weihenstephanensis), this protein is Methylthioribose kinase.